A 351-amino-acid polypeptide reads, in one-letter code: MITLAVDAMGGDQGLAVTVPGATAFLQAHPDVRLIMTGDETQLRQALTAAGAPMERIDICHTTQVVGMDEAPQSALKNKKDSSMRVAINQVKEGKAQAAVSAGNTGALMATARFVLKTIPGIERPAIAKFLPSDTDHVTLALDLGANVDCTSEQLAQFAVIGSELVHALHPQKGQPRVGLVNVGTEDIKGTDTVKQTYKLLQNSKLNFIGNIESNGILYGEADVVVADGFVGNVMLKTIEGAVKFMSGAIRREFQSNLFNKLAAVAALPALKGLKNKLDPRKFNGAILLGLRGIVIKSHGGTDETGFRYALEEAYHEAKSAGLSKIEQGVAEQLAALETAKAVQNENVGGL.

It belongs to the PlsX family. Homodimer. Probably interacts with PlsY.

Its subcellular location is the cytoplasm. It catalyses the reaction a fatty acyl-[ACP] + phosphate = an acyl phosphate + holo-[ACP]. It functions in the pathway lipid metabolism; phospholipid metabolism. Its function is as follows. Catalyzes the reversible formation of acyl-phosphate (acyl-PO(4)) from acyl-[acyl-carrier-protein] (acyl-ACP). This enzyme utilizes acyl-ACP as fatty acyl donor, but not acyl-CoA. This chain is Phosphate acyltransferase, found in Neisseria meningitidis serogroup B (strain ATCC BAA-335 / MC58).